Reading from the N-terminus, the 586-residue chain is Arginine--tRNA ligase (586 aa).

A 'HIGH' region motif is present at residues 131 to 141 (ANPTGPMHVGH).

Belongs to the class-I aminoacyl-tRNA synthetase family. As to quaternary structure, monomer.

It is found in the cytoplasm. The catalysed reaction is tRNA(Arg) + L-arginine + ATP = L-arginyl-tRNA(Arg) + AMP + diphosphate. This is Arginine--tRNA ligase from Rhizobium rhizogenes (strain K84 / ATCC BAA-868) (Agrobacterium radiobacter).